The sequence spans 74 residues: Antimicrobial peptide ToAp1 (74 aa).

The first 22 residues, 1–22, serve as a signal peptide directing secretion; it reads MQMKYLIPIFFLVLIVADHCHA. A Lysine amide modification is found at K39. A propeptide spanning residues 40–74 is cleaved from the precursor; that stretch reads GRRKRDITAQIEQYRNIQKREAAELEELLANLPVY.

Belongs to the non-disulfide-bridged peptide (NDBP) superfamily. Short antimicrobial peptide (group 4) family. As to expression, expressed by the venom gland.

Its subcellular location is the secreted. Its function is as follows. Antimicrobial peptide. Is able to kill Mycobacterium abscessus subsp. massiliense in a dose-dependent manner. Has antifungal activity against Candida spp. and one Cryptococcus neoformans strains with MICs values ranging from 12.5 to 200 uM. Also shows an inhibitory activity on C.albicans biofilms at high concentrations. Shows low cytotoxic activity and has weak hemolytic activity on human erythrocytes. Shows anti-inflammatory activities, since it decreases release of pro-inflammatory cytokines, and increases release of anti-inflammatory cytokines. Acts by blocking the Toll-like receptor 4 (TLR4). In addition, decreases the expression of costimulatory molecules such as CD80 and CD86 in LPS-stimulated cells. In vivo, does not induce immune cell migration. Helical wheel projections predict an amphipathic peptide with distinct hydrophobic and hydrophilic faces. The protein is Antimicrobial peptide ToAp1 of Tityus obscurus (Amazonian scorpion).